Consider the following 116-residue polypeptide: Putative BPES syndrome breakpoint region protein (116 aa).

As to expression, seems to be expressed only in testis.

The sequence is that of Putative BPES syndrome breakpoint region protein (BPESC1) from Homo sapiens (Human).